Reading from the N-terminus, the 112-residue chain is Nitrogen regulatory protein P-II (112 aa).

Position 51 is an O-UMP-tyrosine (tyrosine 51).

This sequence belongs to the P(II) protein family. Homotrimer.

In nitrogen-limiting conditions, when the ratio of Gln to 2-ketoglutarate decreases, P-II is uridylylated to P-II-UMP. P-II-UMP allows the deadenylation of glutamine synthetase (GS), thus activating the enzyme. Conversely, in nitrogen excess P-II is deuridylated and promotes the adenylation of GS. P-II indirectly controls the transcription of the GS gene (glnA). P-II prevents NR-II-catalyzed conversion of NR-I to NR-I-phosphate, the transcriptional activator of glnA. When P-II is uridylylated to P-II-UMP, these events are reversed. In Rhizobium meliloti (strain 1021) (Ensifer meliloti), this protein is Nitrogen regulatory protein P-II (glnB).